We begin with the raw amino-acid sequence, 201 residues long: Testis-expressed protein 38 (201 aa).

The chain crosses the membrane as a helical span at residues 3 to 23 (ISLCIGFLGLCSVLIGSCILF).

Its subcellular location is the membrane. This chain is Testis-expressed protein 38 (Tex38), found in Mus musculus (Mouse).